The chain runs to 818 residues: Lon protease (818 aa).

In terms of domain architecture, Lon N-terminal spans 14 to 216; it reads LPVLPLRDVV…KVFALIEREI (203 aa). An ATP-binding site is contributed by 370–377; the sequence is GPPGVGKT. Residues 605–786 enclose the Lon proteolytic domain; it reads ESLVGIVTGL…DEVIKVALMH (182 aa). Residues Ser692 and Lys735 contribute to the active site.

Belongs to the peptidase S16 family. In terms of assembly, homohexamer. Organized in a ring with a central cavity.

It is found in the cytoplasm. The catalysed reaction is Hydrolysis of proteins in presence of ATP.. Functionally, ATP-dependent serine protease that mediates the selective degradation of mutant and abnormal proteins as well as certain short-lived regulatory proteins. Required for cellular homeostasis and for survival from DNA damage and developmental changes induced by stress. Degrades polypeptides processively to yield small peptide fragments that are 5 to 10 amino acids long. Binds to DNA in a double-stranded, site-specific manner. The polypeptide is Lon protease (Wolbachia pipientis subsp. Culex pipiens (strain wPip)).